Consider the following 374-residue polypeptide: Chaperone protein DnaJ (374 aa).

Positions 5 to 70 (DYYEVLGVNL…RKRASYDQFG (66 aa)) constitute a J domain. Residues 133-210 (GLSRTIKVPT…CHGQGRQQQT (78 aa)) form a CR-type zinc finger. Residues Cys146, Cys149, Cys162, Cys165, Cys184, Cys187, Cys198, and Cys201 each coordinate Zn(2+). 4 CXXCXGXG motif repeats span residues 146-153 (CKTCNGSG), 162-169 (CPRCNGSG), 184-191 (CSVCRGRG), and 198-205 (CTDCHGQG).

It belongs to the DnaJ family. As to quaternary structure, homodimer. Zn(2+) serves as cofactor.

The protein localises to the cytoplasm. Participates actively in the response to hyperosmotic and heat shock by preventing the aggregation of stress-denatured proteins and by disaggregating proteins, also in an autonomous, DnaK-independent fashion. Unfolded proteins bind initially to DnaJ; upon interaction with the DnaJ-bound protein, DnaK hydrolyzes its bound ATP, resulting in the formation of a stable complex. GrpE releases ADP from DnaK; ATP binding to DnaK triggers the release of the substrate protein, thus completing the reaction cycle. Several rounds of ATP-dependent interactions between DnaJ, DnaK and GrpE are required for fully efficient folding. Also involved, together with DnaK and GrpE, in the DNA replication of plasmids through activation of initiation proteins. The sequence is that of Chaperone protein DnaJ from Coxiella burnetii (strain RSA 493 / Nine Mile phase I).